Reading from the N-terminus, the 83-residue chain is Small integral membrane protein 10 (83 aa).

Residues 64–82 traverse the membrane as a helical segment; sequence FFYFYILASVILNVHLQVY.

It localises to the membrane. In Homo sapiens (Human), this protein is Small integral membrane protein 10 (SMIM10).